The following is a 1297-amino-acid chain: Cingulin-like protein 1 (1297 aa).

Positions 1–550 (MELYFGEYQH…ELTQQTNEET (550 aa)) are head. Positions 37 to 51 (AGSYGVSIRVQGIDG) match the ZIM motif. Ser-113, Ser-203, and Ser-257 each carry phosphoserine. Disordered stretches follow at residues 161-208 (NEVN…TSED), 245-306 (GVGE…TPTS), 364-396 (KPGL…AFPF), and 428-467 (QRSV…DGKV). Over residues 197–206 (YGSQPNSPTS) the composition is skewed to polar residues. Positions 268–283 (ETKKNRPDVLPFRRQD) are enriched in basic and acidic residues. 3 positions are modified to phosphoserine: Ser-284, Ser-298, and Ser-299. Low complexity predominate over residues 297-306 (SSSSSTTPTS). A compositionally biased stretch (basic residues) spans 367-378 (LQRRGRSGKRNR). Residues 379–389 (INPDDRKRSRS) show a composition bias toward basic and acidic residues. Phosphoserine occurs at positions 389 and 392. Ser-482 carries the post-translational modification Phosphoserine. Residues 586 to 608 (SRAAGSAQGSNQAPNSPSEGNSL) form a disordered region. Residues 592–608 (AQGSNQAPNSPSEGNSL) show a composition bias toward polar residues. Residues 604–1251 (EGNSLLDQKN…LQGQLNSLKK (648 aa)) are a coiled coil. Residues Ser-678 and Ser-704 each carry the phosphoserine modification. The interval 1259–1297 (SSKVLDDSDDDDLSSDAGSLYEAPLSYAFPKDSTIASQI) is tail.

This sequence belongs to the cingulin family. Homodimer or oligomer. Interacts with CD2AP and SH3BP1; probably part of a complex at cell junctions. As to expression, widely expressed. Highly expressed in the kidney and lung.

The protein resides in the cell junction. Its subcellular location is the tight junction. Its function is as follows. May be involved in anchoring the apical junctional complex, especially tight junctions, to actin-based cytoskeletons. In Mus musculus (Mouse), this protein is Cingulin-like protein 1.